A 129-amino-acid polypeptide reads, in one-letter code: MASRLLRGVGALASQALRARGPNGVSVVRSMASGGGVPTDEEQATGLEREVMLAARKGQDPYNILAPKATSGTKEDPNLVPSITNKRIVGCICEEDNSTVIWFWLHKGEAQRCPSCGTHYKLVPHQLAH.

The transit peptide at 1 to 31 directs the protein to the mitochondrion; that stretch reads MASRLLRGVGALASQALRARGPNGVSVVRSM. An N6-acetyllysine mark is found at Lys68 and Lys86. 4 residues coordinate Zn(2+): Cys91, Cys93, Cys113, and Cys116. Lys121 is subject to N6-acetyllysine.

The protein belongs to the cytochrome c oxidase subunit 5B family. Component of the cytochrome c oxidase (complex IV, CIV), a multisubunit enzyme composed of 14 subunits. The complex is composed of a catalytic core of 3 subunits MT-CO1, MT-CO2 and MT-CO3, encoded in the mitochondrial DNA, and 11 supernumerary subunits COX4I1 (or COX4I2), COX5A, COX5B, COX6A2 (or COX6A1), COX6B1 (or COX6B2), COX6C, COX7A1 (or COX7A2), COX7B, COX7C, COX8B and NDUFA4, which are encoded in the nuclear genome. The complex exists as a monomer or a dimer and forms supercomplexes (SCs) in the inner mitochondrial membrane with NADH-ubiquinone oxidoreductase (complex I, CI) and ubiquinol-cytochrome c oxidoreductase (cytochrome b-c1 complex, complex III, CIII), resulting in different assemblies (supercomplex SCI(1)III(2)IV(1) and megacomplex MCI(2)III(2)IV(2)).

It is found in the mitochondrion inner membrane. It functions in the pathway energy metabolism; oxidative phosphorylation. In terms of biological role, component of the cytochrome c oxidase, the last enzyme in the mitochondrial electron transport chain which drives oxidative phosphorylation. The respiratory chain contains 3 multisubunit complexes succinate dehydrogenase (complex II, CII), ubiquinol-cytochrome c oxidoreductase (cytochrome b-c1 complex, complex III, CIII) and cytochrome c oxidase (complex IV, CIV), that cooperate to transfer electrons derived from NADH and succinate to molecular oxygen, creating an electrochemical gradient over the inner membrane that drives transmembrane transport and the ATP synthase. Cytochrome c oxidase is the component of the respiratory chain that catalyzes the reduction of oxygen to water. Electrons originating from reduced cytochrome c in the intermembrane space (IMS) are transferred via the dinuclear copper A center (CU(A)) of subunit 2 and heme A of subunit 1 to the active site in subunit 1, a binuclear center (BNC) formed by heme A3 and copper B (CU(B)). The BNC reduces molecular oxygen to 2 water molecules using 4 electrons from cytochrome c in the IMS and 4 protons from the mitochondrial matrix. This chain is Cytochrome c oxidase subunit 5B, mitochondrial (COX5B), found in Bos taurus (Bovine).